A 131-amino-acid chain; its full sequence is Small ribosomal subunit protein bS6 (131 aa).

The interval 96–131 is disordered; it reads VTEASPMAKAKDERDSRRGPAGDRSYDEANAEEIAE. Residues 104–122 show a composition bias toward basic and acidic residues; that stretch reads KAKDERDSRRGPAGDRSYD.

Belongs to the bacterial ribosomal protein bS6 family.

In terms of biological role, binds together with bS18 to 16S ribosomal RNA. The protein is Small ribosomal subunit protein bS6 of Shewanella sp. (strain ANA-3).